Consider the following 361-residue polypeptide: dTDP-glucose 4,6-dehydratase 1 (361 aa).

Residues 11-12, 32-35, 58-59, 80-84, and Thr99 contribute to the NAD(+) site; these read FI, DKLT, DI, and LAAES. Ser84 contributes to the substrate binding site. Residue Thr133 participates in substrate binding. The Proton donor role is filled by Asp134. Residues Glu135 and Tyr167 each act as proton acceptor in the active site. Position 167 to 171 (167 to 171) interacts with NAD(+); it reads YSASK. Asn196 contacts substrate. Asn197 provides a ligand contact to NAD(+). Residues 206–207, 222–224, Arg231, Asn266, and 296–300 each bind substrate; these read KL, PIY, and DRPGH.

It belongs to the NAD(P)-dependent epimerase/dehydratase family. dTDP-glucose dehydratase subfamily. In terms of assembly, homodimer. Requires NAD(+) as cofactor.

It carries out the reaction dTDP-alpha-D-glucose = dTDP-4-dehydro-6-deoxy-alpha-D-glucose + H2O. Its pathway is carbohydrate biosynthesis; dTDP-L-rhamnose biosynthesis. The protein operates within bacterial outer membrane biogenesis; LPS O-antigen biosynthesis. In terms of biological role, catalyzes the dehydration of dTDP-D-glucose to form dTDP-6-deoxy-D-xylo-4-hexulose via a three-step process involving oxidation, dehydration and reduction. The protein is dTDP-glucose 4,6-dehydratase 1 (rfbB) of Escherichia coli (strain K12).